Here is a 102-residue protein sequence, read N- to C-terminus: Small ribosomal subunit protein uS10 (102 aa).

The protein belongs to the universal ribosomal protein uS10 family. In terms of assembly, part of the 30S ribosomal subunit.

Functionally, involved in the binding of tRNA to the ribosomes. In Saccharolobus islandicus (strain M.16.4 / Kamchatka #3) (Sulfolobus islandicus), this protein is Small ribosomal subunit protein uS10.